Reading from the N-terminus, the 788-residue chain is Pre-rRNA-processing protein TSR1 homolog (788 aa).

The segment at 1 to 40 (MSTTGHRAGVFKKPAKPHKSWKGKRTKGEITTENRGREGV) is disordered. Over residues 9 to 25 (GVFKKPAKPHKSWKGKR) the composition is skewed to basic residues. The span at 26–40 (TKGEITTENRGREGV) shows a compositional bias: basic and acidic residues. Residues 83 to 243 (APCLVTILSL…LRTLNETKKK (161 aa)) enclose the Bms1-type G domain. A disordered region spans residues 354–433 (LEEADKEMRR…ASEMMFHDEI (80 aa)). Acidic residues predominate over residues 378–412 (DDSEDDEDEEDEDEDMDDEEEDKDLEEDDEEEDTP).

It belongs to the TRAFAC class translation factor GTPase superfamily. Bms1-like GTPase family. TSR1 subfamily.

It localises to the nucleus. Its subcellular location is the nucleolus. Required during maturation of the 40S ribosomal subunit in the nucleolus. This chain is Pre-rRNA-processing protein TSR1 homolog, found in Caenorhabditis briggsae.